We begin with the raw amino-acid sequence, 702 residues long: 1,4-alpha-glucan-branching enzyme (702 aa).

Ala2 is subject to N-acetylalanine. Residues 62 to 63 (NE) and 91 to 93 (WAP) contribute to the substrate site. Residue Trp107 participates in (1,4-alpha-D-glucosyl)n binding. 118–121 (DYGK) provides a ligand contact to substrate. Residue Lys143 coordinates (1,4-alpha-D-glucosyl)n. Tyr173 carries the phosphotyrosine modification. 333–336 (EILR) contributes to the substrate binding site. Residue Asp357 is the Nucleophile of the active site. The Proton donor role is filled by Glu412.

Belongs to the glycosyl hydrolase 13 family. GlgB subfamily. In terms of assembly, monomer.

The enzyme catalyses Transfers a segment of a (1-&gt;4)-alpha-D-glucan chain to a primary hydroxy group in a similar glucan chain.. The protein operates within glycan biosynthesis; glycogen biosynthesis. In terms of biological role, glycogen-branching enzyme participates in the glycogen biosynthetic process along with glycogenin and glycogen synthase. Generates alpha-1,6-glucosidic branches from alpha-1,4-linked glucose chains, to increase solubility of the glycogen polymer. This chain is 1,4-alpha-glucan-branching enzyme (GBE1), found in Homo sapiens (Human).